Reading from the N-terminus, the 468-residue chain is Meiotically up-regulated gene 111 protein (468 aa).

12 helical membrane-spanning segments follow: residues 13–33, 59–79, 92–112, 116–136, 158–178, 190–210, 285–305, 330–350, 356–376, 382–402, 417–437, and 446–466; these read LVLI…NSVT, IVSA…VPFY, VFTT…SILY, FPTC…ISGT, IVVL…LGSI, LISW…AVFF, PIPI…FFDI, FGSL…GFSV, TMLI…FATA, LALF…LVAA, ALLE…AFIV, and FFIG…LLLG.

The protein localises to the membrane. Its function is as follows. Has a role in meiosis. In Schizosaccharomyces pombe (strain 972 / ATCC 24843) (Fission yeast), this protein is Meiotically up-regulated gene 111 protein (mug111).